Consider the following 444-residue polypeptide: Protein phosphatase 2C homolog C10F6.17c (444 aa).

A PPM-type phosphatase domain is found at 85-439; the sequence is RYDFNQVASN…DDITVTVIFF (355 aa). Asp121, Gly122, and Asp344 together coordinate Mn(2+).

Belongs to the PP2C family. Mg(2+) serves as cofactor. It depends on Mn(2+) as a cofactor.

The protein resides in the mitochondrion. It catalyses the reaction O-phospho-L-seryl-[protein] + H2O = L-seryl-[protein] + phosphate. The catalysed reaction is O-phospho-L-threonyl-[protein] + H2O = L-threonyl-[protein] + phosphate. In terms of biological role, involved in regulation of pyruvate dehydrogenase activity. The chain is Protein phosphatase 2C homolog C10F6.17c from Schizosaccharomyces pombe (strain 972 / ATCC 24843) (Fission yeast).